A 349-amino-acid polypeptide reads, in one-letter code: NADH-ubiquinone oxidoreductase chain 2 (349 aa).

10 helical membrane passes run 3–23 (PYVL…TFAS), 25–45 (HWLL…PIMA), 66–86 (AAAM…EWEI), 98–118 (VMLA…LPEV), 149–171 (INSS…GGLN), 178–197 (ILAY…LQYA), 202–219 (LLSL…FLTL), 240–260 (LAAL…LSGF), 274–294 (GLPL…YFYL), and 319–339 (FTLI…LLPL).

Belongs to the complex I subunit 2 family.

It is found in the mitochondrion inner membrane. The enzyme catalyses a ubiquinone + NADH + 5 H(+)(in) = a ubiquinol + NAD(+) + 4 H(+)(out). Functionally, core subunit of the mitochondrial membrane respiratory chain NADH dehydrogenase (Complex I) that is believed to belong to the minimal assembly required for catalysis. Complex I functions in the transfer of electrons from NADH to the respiratory chain. The immediate electron acceptor for the enzyme is believed to be ubiquinone. The sequence is that of NADH-ubiquinone oxidoreductase chain 2 (MT-ND2) from Salmo salar (Atlantic salmon).